We begin with the raw amino-acid sequence, 347 residues long: Probable nitronate monooxygenase (347 aa).

FMN-binding positions include N69, Q171, G176, G213, and 232-235; that span reads QIGS.

The protein belongs to the nitronate monooxygenase family. NMO class I subfamily. FMN serves as cofactor.

The catalysed reaction is 3 propionate 3-nitronate + 3 O2 + H2O = 3 3-oxopropanoate + 2 nitrate + nitrite + H2O2 + 3 H(+). Functionally, nitronate monooxygenase that uses molecular oxygen to catalyze the oxidative denitrification of alkyl nitronates. Acts on propionate 3-nitronate (P3N), the presumed physiological substrate. Probably functions in the detoxification of P3N, a metabolic poison produced by plants and fungi as a defense mechanism. The sequence is that of Probable nitronate monooxygenase (yrpB) from Bacillus subtilis (strain 168).